The primary structure comprises 29 residues: Omega-conotoxin MVIIC (29 aa).

Positions 1–2 are excised as a propeptide; the sequence is TR. 3 disulfides stabilise this stretch: cysteine 3-cysteine 18, cysteine 10-cysteine 22, and cysteine 17-cysteine 28. A Cysteine amide modification is found at cysteine 28.

It belongs to the conotoxin O1 superfamily. Post-translationally, not hydroxylated; hydroxylation, on a synthetic hydroxylated MVIIC, has a significant impact on the oxidative folding but not on the biological activity. In terms of tissue distribution, expressed by the venom duct.

The protein resides in the secreted. Omega-conotoxins act at presynaptic membranes, they bind and block voltage-gated calcium channels (Cav). This toxin preferentially blocks P/Q-type calcium channels (Cav2.1/CACNA1A) (IC(50)=0.60 nM). Also shows an inhibition on Cav2.2/CACNA1A channels (IC(50)=7.0 nM). This chain is Omega-conotoxin MVIIC, found in Conus magus (Magical cone).